The chain runs to 558 residues: Putative ABC transporter ATP-binding protein SMU_1934c (558 aa).

ABC transporter domains follow at residues 5 to 246 (IEFK…GIRE) and 295 to 527 (FDIQ…ANLK). Residues 39 to 46 (GPSGSGKS) and 328 to 335 (GKNGAGKS) each bind ATP.

This sequence belongs to the ABC transporter superfamily.

It is found in the cell membrane. In terms of biological role, probably part of an ABC transporter complex. Responsible for energy coupling to the transport system. The polypeptide is Putative ABC transporter ATP-binding protein SMU_1934c (sdcBA) (Streptococcus mutans serotype c (strain ATCC 700610 / UA159)).